Here is a 151-residue protein sequence, read N- to C-terminus: Ribonuclease H (151 aa).

The 141-residue stretch at 1-141 (MKNVIIYTDG…ADALANRGID (141 aa)) folds into the RNase H type-1 domain. Mg(2+)-binding residues include D9, E47, D69, and D133.

It belongs to the RNase H family. In terms of assembly, monomer. It depends on Mg(2+) as a cofactor.

Its subcellular location is the cytoplasm. The catalysed reaction is Endonucleolytic cleavage to 5'-phosphomonoester.. Functionally, endonuclease that specifically degrades the RNA of RNA-DNA hybrids. The polypeptide is Ribonuclease H (Alcanivorax borkumensis (strain ATCC 700651 / DSM 11573 / NCIMB 13689 / SK2)).